Reading from the N-terminus, the 278-residue chain is Tryptophan synthase alpha chain (278 aa).

Active-site proton acceptor residues include glutamate 50 and aspartate 61.

This sequence belongs to the TrpA family. Tetramer of two alpha and two beta chains.

The enzyme catalyses (1S,2R)-1-C-(indol-3-yl)glycerol 3-phosphate + L-serine = D-glyceraldehyde 3-phosphate + L-tryptophan + H2O. It participates in amino-acid biosynthesis; L-tryptophan biosynthesis; L-tryptophan from chorismate: step 5/5. Functionally, the alpha subunit is responsible for the aldol cleavage of indoleglycerol phosphate to indole and glyceraldehyde 3-phosphate. The sequence is that of Tryptophan synthase alpha chain from Nitrobacter winogradskyi (strain ATCC 25391 / DSM 10237 / CIP 104748 / NCIMB 11846 / Nb-255).